The sequence spans 396 residues: MEFSQFKVNALMEITACPDLVFVRGQGSWLEDHAGKRYLDFVQGWAVNTLGHCAPEMKRALAEQADKLMNPSPAFYNLPSIELAQRLTSASCFDRVFFANSGAEANEGAIKLARKWGRVNRNGAYKIITMNHGFHGRTLATMSASGKPGWDTMFAPQVEGFPKAEINDLDSVRALIDAQTVAVMLEPVQGEAGVIPATREFMQGLRKLADEHGILFIVDEVQTGMGRTGSLFAYQQFDVIPDIMTLAKGIGGGIPLAALLAREEVCVFAHGDQGGTYNGNPLCAAVGVAVFDTITAPGFMEAAQARTRQLSEGLLALSAKRGLRGERGMGLLRALVLDRDDAPAIVEAARMLAPEGLLLNAPRGNLLRFMPALNVTEADMARMLEQLDGVIAAVRK.

Residues 102-103 (GA) and phenylalanine 134 each bind pyridoxal 5'-phosphate. Arginine 137 contributes to the N(2)-acetyl-L-ornithine binding site. 219–222 (DEVQ) contributes to the pyridoxal 5'-phosphate binding site. Lysine 248 is subject to N6-(pyridoxal phosphate)lysine. Residue threonine 276 participates in pyridoxal 5'-phosphate binding.

This sequence belongs to the class-III pyridoxal-phosphate-dependent aminotransferase family. ArgD subfamily. In terms of assembly, homodimer. The cofactor is pyridoxal 5'-phosphate.

The protein resides in the cytoplasm. It carries out the reaction N(2)-acetyl-L-ornithine + 2-oxoglutarate = N-acetyl-L-glutamate 5-semialdehyde + L-glutamate. Its pathway is amino-acid biosynthesis; L-arginine biosynthesis; N(2)-acetyl-L-ornithine from L-glutamate: step 4/4. The sequence is that of Acetylornithine aminotransferase 2 from Bordetella parapertussis (strain 12822 / ATCC BAA-587 / NCTC 13253).